The primary structure comprises 218 residues: Protein-methionine-sulfoxide reductase heme-binding subunit MsrQ (218 aa).

The next 5 helical transmembrane spans lie at 14 to 34, 60 to 80, 86 to 106, 121 to 141, and 155 to 175; these read LVHA…WQVW, LLLI…AVVI, LGLY…TLDL, PYIT…ITST, and LHML…WLVK.

It belongs to the MsrQ family. As to quaternary structure, heterodimer of a catalytic subunit (MsrP) and a heme-binding subunit (MsrQ). Requires FMN as cofactor. Heme b is required as a cofactor.

Its subcellular location is the cell inner membrane. In terms of biological role, part of the MsrPQ system that repairs oxidized periplasmic proteins containing methionine sulfoxide residues (Met-O), using respiratory chain electrons. Thus protects these proteins from oxidative-stress damage caused by reactive species of oxygen and chlorine generated by the host defense mechanisms. MsrPQ is essential for the maintenance of envelope integrity under bleach stress, rescuing a wide series of structurally unrelated periplasmic proteins from methionine oxidation. MsrQ provides electrons for reduction to the reductase catalytic subunit MsrP, using the quinone pool of the respiratory chain. The polypeptide is Protein-methionine-sulfoxide reductase heme-binding subunit MsrQ (Xanthomonas axonopodis pv. citri (strain 306)).